The chain runs to 464 residues: MAFFLIFLSSFFGLCIFCTALLRWNQVKYNQKNLPPGTMGWPLFGETTEFLKLGPSFMKNQRARYGSFFKSHILGCPTIVSMDSELNRYILVNEAKGLVPGYPQSMIDILGKCNIAAVNGSAHKYMRGALLSLISPTMIRDQLLPKIDEFMRSHLTNWDNKVIDIQEKTNKMAFLSSLKQIAGIESTSLAQEFMSEFFNLVLGTLSLPINLPNTNYHRGFQARKIIVNLLRTLIEERRASKEIQHDMLGYLMNEEATRFKLTDDEMIDLIITILYSGYETVSTTSMMAVKYLHDHPKVLEELRKEHMAIREKKKPEDPIDYNDYRSMRFTRAVILETSRLATIVNGVLRKTTQDMEINGYIIPKGWRIYVYTRELNYDPRLYPDPYSFNPWRWMDKSLEHQNSFLVFGGGTRQCPGKELGVAEISTFLHYFVTKYRWEEIGGDKLMKFPRVEAPNGLRIRVSAH.

Residues 2–22 (AFFLIFLSSFFGLCIFCTALL) form a helical membrane-spanning segment. Cys-414 is a binding site for heme.

This sequence belongs to the cytochrome P450 family. It depends on heme as a cofactor. As to expression, expressed in sub-meristematic regions of shoot and root apexes, in zones undergoing lateral root formation, in fruits, and in all flower parts, with a high expression in young flower buds and at the joint in the pedicel.

It localises to the membrane. It carries out the reaction 6-deoxocastasterone + reduced [NADPH--hemoprotein reductase] + O2 = 6alpha-hydroxycastasterone + oxidized [NADPH--hemoprotein reductase] + H2O + H(+). The enzyme catalyses 6alpha-hydroxycastasterone + reduced [NADPH--hemoprotein reductase] + O2 = castasterone + oxidized [NADPH--hemoprotein reductase] + 2 H2O + H(+). The catalysed reaction is 6-deoxocastasterone + 2 reduced [NADPH--hemoprotein reductase] + 2 O2 = castasterone + 2 oxidized [NADPH--hemoprotein reductase] + 3 H2O + 2 H(+). It functions in the pathway plant hormone biosynthesis; brassinosteroid biosynthesis. Its function is as follows. Catalyzes the C6-oxidation step in brassinosteroids biosynthesis. Converts 6-deoxocastasterone (6-deoxoCS) to castasterone (CS). May also convert 6-deoxoteasterone (6-deoxoTE) to teasterone (TE), 3-dehydro-6-deoxoteasterone (6-deoxo3DT, 6-deoxo3DHT) to 3-dehydroteasterone (3DT, 3-DHT), and 6-deoxotyphasterol (6-deoxoTY) to typhasterol (TY), but not castasterone (CS) to brassinolide (BL). This is Cytochrome P450 85A1 from Solanum lycopersicum (Tomato).